The sequence spans 351 residues: MDEKIETRLIGATVQSNEPDLERSIRPKRLSDYIGQAAVREQMDIFIRAATNRREALDHVLIFGPPGLGKTTLAHIIAHEMQAGLKQTSGPVLEKAGDLAALLTNLEPHDVLFIDEIHRLNPAIEEVLYPALEDFQLDIIIGEGPSARSIKLDLPPFTLVGATTRAGLLTSPLRDRFGIVQRLEFYRIPDLIHIVKRAAHILNVVIDENGAGEIARRSRGTPRIANRLLRRVRDFAEVRANGMINESIAKEALDLLNVDIRGLDVMDRKLLETIIKKFQGGPVGIESLAAAISEERGTIEDVIEPYLIQEGFILRTPRGRIATELTYQHFKLPLPTQSTLQENFDLLGKVE.

The segment at 1–186 is large ATPase domain (RuvB-L); that stretch reads MDEKIETRLI…FGIVQRLEFY (186 aa). ATP-binding positions include I25, R26, G67, K70, T71, T72, 133–135, R176, Y186, and R223; that span reads EDF. Residue T71 coordinates Mg(2+). The interval 187 to 257 is small ATPAse domain (RuvB-S); the sequence is RIPDLIHIVK…IAKEALDLLN (71 aa). Residues 260-351 form a head domain (RuvB-H) region; it reads IRGLDVMDRK…ENFDLLGKVE (92 aa). Residues R296, R315, and R320 each coordinate DNA.

Belongs to the RuvB family. In terms of assembly, homohexamer. Forms an RuvA(8)-RuvB(12)-Holliday junction (HJ) complex. HJ DNA is sandwiched between 2 RuvA tetramers; dsDNA enters through RuvA and exits via RuvB. An RuvB hexamer assembles on each DNA strand where it exits the tetramer. Each RuvB hexamer is contacted by two RuvA subunits (via domain III) on 2 adjacent RuvB subunits; this complex drives branch migration. In the full resolvosome a probable DNA-RuvA(4)-RuvB(12)-RuvC(2) complex forms which resolves the HJ.

Its subcellular location is the cytoplasm. The enzyme catalyses ATP + H2O = ADP + phosphate + H(+). Functionally, the RuvA-RuvB-RuvC complex processes Holliday junction (HJ) DNA during genetic recombination and DNA repair, while the RuvA-RuvB complex plays an important role in the rescue of blocked DNA replication forks via replication fork reversal (RFR). RuvA specifically binds to HJ cruciform DNA, conferring on it an open structure. The RuvB hexamer acts as an ATP-dependent pump, pulling dsDNA into and through the RuvAB complex. RuvB forms 2 homohexamers on either side of HJ DNA bound by 1 or 2 RuvA tetramers; 4 subunits per hexamer contact DNA at a time. Coordinated motions by a converter formed by DNA-disengaged RuvB subunits stimulates ATP hydrolysis and nucleotide exchange. Immobilization of the converter enables RuvB to convert the ATP-contained energy into a lever motion, pulling 2 nucleotides of DNA out of the RuvA tetramer per ATP hydrolyzed, thus driving DNA branch migration. The RuvB motors rotate together with the DNA substrate, which together with the progressing nucleotide cycle form the mechanistic basis for DNA recombination by continuous HJ branch migration. Branch migration allows RuvC to scan DNA until it finds its consensus sequence, where it cleaves and resolves cruciform DNA. The polypeptide is Holliday junction branch migration complex subunit RuvB (Coxiella burnetii (strain RSA 331 / Henzerling II)).